We begin with the raw amino-acid sequence, 426 residues long: Dihydroorotase (426 aa).

Zn(2+)-binding residues include His-58 and His-60. Substrate is bound by residues 60 to 62 (HLR) and Asn-92. 3 residues coordinate Zn(2+): Asp-150, His-177, and His-230. Asn-276 contacts substrate. Asp-303 is a binding site for Zn(2+). Residue Asp-303 is part of the active site. Substrate contacts are provided by residues His-307 and 321-322 (FG).

Belongs to the metallo-dependent hydrolases superfamily. DHOase family. Class I DHOase subfamily. The cofactor is Zn(2+).

It carries out the reaction (S)-dihydroorotate + H2O = N-carbamoyl-L-aspartate + H(+). Its pathway is pyrimidine metabolism; UMP biosynthesis via de novo pathway; (S)-dihydroorotate from bicarbonate: step 3/3. Functionally, catalyzes the reversible cyclization of carbamoyl aspartate to dihydroorotate. The sequence is that of Dihydroorotase from Listeria innocua serovar 6a (strain ATCC BAA-680 / CLIP 11262).